The chain runs to 223 residues: Neurotrophic factor BDNF precursor form (223 aa).

Residues 1 to 5 form the signal peptide; the sequence is SCMKA. The propeptide occupies 6 to 114; that stretch reads APMKEVSIRG…AANMSMRVRR (109 aa). N-linked (GlcNAc...) asparagine glycosylation occurs at Asn107. 2 cysteine pairs are disulfide-bonded: Cys127–Cys194 and Cys172–Cys223.

Belongs to the NGF-beta family.

It is found in the secreted. Its function is as follows. Promotes the survival of neuronal populations that are all located either in the central nervous system or directly connected to it. The polypeptide is Neurotrophic factor BDNF precursor form (BDNF) (Exiliboa placata (Oaxacan dwarf boa)).